A 403-amino-acid chain; its full sequence is MAKLIVSDLDLKGKKVLVRVDFNVPIKNGVIGDDNRIVAALPTIKYIIEHGGKAILLSHLGRVKSDADKKELSLRPVAERLSELLKKPVTFVPENEGKEVEETIDKMKDGDVIVLENTRFQDIDNDFGKRESKNDPKLGEYWASLGDVFVNDAFGTAHRSHASNVGIATAMKKAGKPAAAGFLLEKEIKFLGDAVENPVHPFVTILGGAKVSDKIGVIENLIPKSDHILIGGGMAYTFLAAQGHKIGKSLFEADKVELAKELLAKAGDKIVLPVDNVAATEFSNDAPHEVVGDDIPDNEMGLDIGPKTVEKFRDILKDAKTVVWNGPMGAFEMPNYAEGTLEVGRALADLKDAVTIIGGGDSTAAAKQLGIAPKISHISTGGGASLNYLEGKELPGIACVSDK.

Residues 21 to 23 (DFN), R36, 59 to 62 (HLGR), R119, and R159 each bind substrate. ATP-binding positions include K214, G301, E332, and 359–362 (GGDS).

Belongs to the phosphoglycerate kinase family. As to quaternary structure, monomer.

The protein resides in the cytoplasm. It carries out the reaction (2R)-3-phosphoglycerate + ATP = (2R)-3-phospho-glyceroyl phosphate + ADP. The protein operates within carbohydrate degradation; glycolysis; pyruvate from D-glyceraldehyde 3-phosphate: step 2/5. This Lactobacillus gasseri (strain ATCC 33323 / DSM 20243 / BCRC 14619 / CIP 102991 / JCM 1131 / KCTC 3163 / NCIMB 11718 / NCTC 13722 / AM63) protein is Phosphoglycerate kinase.